The primary structure comprises 391 residues: 1-deoxy-D-xylulose 5-phosphate reductoisomerase (391 aa).

NADPH is bound by residues Thr-10, Gly-11, Ser-12, Ile-13, Asn-38, and Asn-122. Lys-123 is a binding site for 1-deoxy-D-xylulose 5-phosphate. Residue Glu-124 coordinates NADPH. A Mn(2+)-binding site is contributed by Asp-148. 1-deoxy-D-xylulose 5-phosphate contacts are provided by Ser-149, Glu-150, Ser-173, and His-196. Glu-150 serves as a coordination point for Mn(2+). Gly-202 is a binding site for NADPH. Ser-209, Asn-214, Lys-215, and Glu-218 together coordinate 1-deoxy-D-xylulose 5-phosphate. Position 218 (Glu-218) interacts with Mn(2+).

The protein belongs to the DXR family. The cofactor is Mg(2+). Mn(2+) is required as a cofactor.

It catalyses the reaction 2-C-methyl-D-erythritol 4-phosphate + NADP(+) = 1-deoxy-D-xylulose 5-phosphate + NADPH + H(+). The protein operates within isoprenoid biosynthesis; isopentenyl diphosphate biosynthesis via DXP pathway; isopentenyl diphosphate from 1-deoxy-D-xylulose 5-phosphate: step 1/6. Catalyzes the NADPH-dependent rearrangement and reduction of 1-deoxy-D-xylulose-5-phosphate (DXP) to 2-C-methyl-D-erythritol 4-phosphate (MEP). The protein is 1-deoxy-D-xylulose 5-phosphate reductoisomerase of Wolbachia pipientis subsp. Culex pipiens (strain wPip).